Consider the following 143-residue polypeptide: 3-hydroxyacyl-[acyl-carrier-protein] dehydratase FabZ (143 aa).

The active site involves histidine 48.

It belongs to the thioester dehydratase family. FabZ subfamily.

Its subcellular location is the cytoplasm. The enzyme catalyses a (3R)-hydroxyacyl-[ACP] = a (2E)-enoyl-[ACP] + H2O. Involved in unsaturated fatty acids biosynthesis. Catalyzes the dehydration of short chain beta-hydroxyacyl-ACPs and long chain saturated and unsaturated beta-hydroxyacyl-ACPs. In Roseiflexus castenholzii (strain DSM 13941 / HLO8), this protein is 3-hydroxyacyl-[acyl-carrier-protein] dehydratase FabZ.